Here is a 158-residue protein sequence, read N- to C-terminus: Transcription elongation factor GreA (158 aa).

It belongs to the GreA/GreB family.

Necessary for efficient RNA polymerase transcription elongation past template-encoded arresting sites. The arresting sites in DNA have the property of trapping a certain fraction of elongating RNA polymerases that pass through, resulting in locked ternary complexes. Cleavage of the nascent transcript by cleavage factors such as GreA or GreB allows the resumption of elongation from the new 3'terminus. GreA releases sequences of 2 to 3 nucleotides. The protein is Transcription elongation factor GreA of Macrococcus caseolyticus (strain JCSC5402) (Macrococcoides caseolyticum).